The primary structure comprises 856 residues: 3-hydroxy-3-methylglutaryl-coenzyme A reductase (856 aa).

4 consecutive transmembrane segments (helical) span residues 12–32 (FCASHPWEVIVATLTLTVCML), 89–109 (ILGIAGLFTVFSSFVFSSSVI), 123–143 (LFFFLLLIDLSKATVLAQFAL), and 190–210 (VLCCFACMSVIVNYVVFMTFY). The N-linked (GlcNAc...) asparagine glycan is linked to N326. A helical membrane pass occupies residues 344-364 (SADHIVILILLLALAVKFVFF). A linker region spans residues 365–443 (ETRDELTTTR…CEVMALVTSG (79 aa)). A glycan (N-linked (GlcNAc...) asparagine) is linked at N412. The segment at 443-771 (GHIAGYQLEK…SCTMPSIEIG (329 aa)) is catalytic. Catalysis depends on charge relay system residues E528 and K659. The N-linked (GlcNAc...) asparagine glycan is linked to N700. The Charge relay system role is filled by D735. The active-site Proton donor is the H834. The disordered stretch occupies residues 836–856 (RHNRSSVSTSGSEPSTPACKS). N838 carries an N-linked (GlcNAc...) asparagine glycan. A compositionally biased stretch (low complexity) spans 840-856 (SSVSTSGSEPSTPACKS).

Belongs to the HMG-CoA reductase family.

Its subcellular location is the endoplasmic reticulum membrane. It catalyses the reaction (R)-mevalonate + 2 NADP(+) + CoA = (3S)-3-hydroxy-3-methylglutaryl-CoA + 2 NADPH + 2 H(+). Its pathway is metabolic intermediate biosynthesis; (R)-mevalonate biosynthesis; (R)-mevalonate from acetyl-CoA: step 3/3. The activity of HMG-CoA-reductase is suppressed by exogenous mevalonate. In terms of biological role, synthesis of mevalonate for the production of non-sterol isoprenoids, which are essential for growth differentiation. This chain is 3-hydroxy-3-methylglutaryl-coenzyme A reductase, found in Blattella germanica (German cockroach).